Consider the following 250-residue polypeptide: 1-(5-phosphoribosyl)-5-[(5-phosphoribosylamino)methylideneamino] imidazole-4-carboxamide isomerase (250 aa).

Asp7 functions as the Proton acceptor in the catalytic mechanism. Asp129 acts as the Proton donor in catalysis.

The protein belongs to the HisA/HisF family.

The protein localises to the cytoplasm. The enzyme catalyses 1-(5-phospho-beta-D-ribosyl)-5-[(5-phospho-beta-D-ribosylamino)methylideneamino]imidazole-4-carboxamide = 5-[(5-phospho-1-deoxy-D-ribulos-1-ylimino)methylamino]-1-(5-phospho-beta-D-ribosyl)imidazole-4-carboxamide. Its pathway is amino-acid biosynthesis; L-histidine biosynthesis; L-histidine from 5-phospho-alpha-D-ribose 1-diphosphate: step 4/9. The sequence is that of 1-(5-phosphoribosyl)-5-[(5-phosphoribosylamino)methylideneamino] imidazole-4-carboxamide isomerase from Shewanella denitrificans (strain OS217 / ATCC BAA-1090 / DSM 15013).